A 595-amino-acid chain; its full sequence is Aspartate--tRNA(Asp/Asn) ligase (595 aa).

Position 175 (glutamate 175) interacts with L-aspartate. Residues 199-202 (QQYK) are aspartate. Positions 221 and 454 each coordinate L-aspartate. 221–223 (RDE) provides a ligand contact to ATP. Glutamate 488 is an ATP binding site. Arginine 495 serves as a coordination point for L-aspartate. 540–543 (GIDR) is a binding site for ATP.

Belongs to the class-II aminoacyl-tRNA synthetase family. Type 1 subfamily. Homodimer.

It localises to the cytoplasm. The enzyme catalyses tRNA(Asx) + L-aspartate + ATP = L-aspartyl-tRNA(Asx) + AMP + diphosphate. Its function is as follows. Aspartyl-tRNA synthetase with relaxed tRNA specificity since it is able to aspartylate not only its cognate tRNA(Asp) but also tRNA(Asn). Reaction proceeds in two steps: L-aspartate is first activated by ATP to form Asp-AMP and then transferred to the acceptor end of tRNA(Asp/Asn). The chain is Aspartate--tRNA(Asp/Asn) ligase from Brucella canis (strain ATCC 23365 / NCTC 10854 / RM-666).